The primary structure comprises 61 residues: Small ribosomal subunit protein eS31 (61 aa).

Cys22, Cys25, Cys38, and Cys41 together coordinate Zn(2+). The segment at 22-41 (CPRCGSFMAEHKDRYHCGKC) adopts a C4-type zinc-finger fold.

Belongs to the eukaryotic ribosomal protein eS31 family. Part of the 30S ribosomal subunit. Zn(2+) is required as a cofactor.

This is Small ribosomal subunit protein eS31 from Nanoarchaeum equitans (strain Kin4-M).